The following is a 525-amino-acid chain: MAVWRSCLRASSSRHRLSSLFFSHHLKPSSFISHSPPLFSPSPSPSPTCFSPLHRLLSSGPEFPIGSQEIIPTDDSSLPVLAVVDFLEGFHEFTGLPWWMIIASSTVAVRLALLPLLILQLKKLKTISELLPKLPMPIPETPTLKGSIDQFSHFLKESRAIGCPSFLWFFPYLSVQLPCFFLLMASIRKMSLDGHPGFDSGGVLWFQNLSDLPGGSFGPVFPILIATFHYINIQISFDTSTIRQTTGLTGLLMRYYKLYLEILSVPLFFVGYAIPQGSLVYWVTNSSVNIFQQLSLKHPTVGAKLGLLSQGATPGMGHSMEISESVIKYVDSDSKEQTLSLQTLTPEELLSLSVQVLSKGDKETSIQLLRLALEKDPGYVRGLVLMGQALLQKTQLSEATEYLELAISKLLDEDPSDAEDVELLMLASQWAGAAYVQQGKLKSGIIHLERVAKLREPGDPKSKEHYFEALLLLSSALYKEGQSDEAAKILRVVVDHNPAYKPLLEQCEDENELVSDLVSRRKDHF.

4 consecutive transmembrane segments (helical) span residues 99-119 (WMII…LLIL), 167-187 (LWFF…MASI), 217-237 (FGPV…QISF), and 262-282 (ILSV…LVYW). TPR repeat units lie at residues 346–379 (PEEL…DPGY), 380–413 (VRGL…LLDE), 425–458 (MLAS…REPG), and 467–500 (FEAL…NPAY).

This sequence belongs to the OXA1/ALB3/YidC (TC 2.A.9.2) family.

The protein localises to the plastid. It is found in the chloroplast thylakoid membrane. Probably required for the insertion of integral membrane proteins into the chloroplast thylakoid membranes. The sequence is that of ALBINO3-like protein 2, chloroplastic (ALB3L2) from Arabidopsis thaliana (Mouse-ear cress).